The sequence spans 91 residues: Small ribosomal subunit protein uS19 (91 aa).

It belongs to the universal ribosomal protein uS19 family.

Its function is as follows. Protein S19 forms a complex with S13 that binds strongly to the 16S ribosomal RNA. The sequence is that of Small ribosomal subunit protein uS19 from Amoebophilus asiaticus (strain 5a2).